The following is a 508-amino-acid chain: Maturase K (508 aa).

It belongs to the intron maturase 2 family. MatK subfamily.

The protein localises to the plastid. It is found in the chloroplast. Usually encoded in the trnK tRNA gene intron. Probably assists in splicing its own and other chloroplast group II introns. This Gordonia lasianthus (Loblolly bay) protein is Maturase K.